We begin with the raw amino-acid sequence, 179 residues long: Large ribosomal subunit protein uL5 (179 aa).

Lysine 3 is modified (N6-acetyllysine).

This sequence belongs to the universal ribosomal protein uL5 family. In terms of assembly, part of the 50S ribosomal subunit; part of the 5S rRNA/L5/L18/L25 subcomplex. Contacts the 5S rRNA and the P site tRNA. Forms a bridge to the 30S subunit in the 70S ribosome.

This is one of the proteins that bind and probably mediate the attachment of the 5S RNA into the large ribosomal subunit, where it forms part of the central protuberance. In the 70S ribosome it contacts protein S13 of the 30S subunit (bridge B1b), connecting the 2 subunits; this bridge is implicated in subunit movement. Contacts the P site tRNA; the 5S rRNA and some of its associated proteins might help stabilize positioning of ribosome-bound tRNAs. This chain is Large ribosomal subunit protein uL5, found in Escherichia coli O45:K1 (strain S88 / ExPEC).